A 165-amino-acid polypeptide reads, in one-letter code: Protein SprT (165 aa).

The SprT-like domain maps to 19 to 163 (REKLAQANLK…RCVKCGEPLV (145 aa)). Residue His78 participates in Zn(2+) binding. Glu79 is an active-site residue. Position 82 (His82) interacts with Zn(2+).

This sequence belongs to the SprT family. Requires Zn(2+) as cofactor.

It is found in the cytoplasm. The protein is Protein SprT of Enterobacter sp. (strain 638).